The primary structure comprises 185 residues: GTP cyclohydrolase 1 (185 aa).

3 residues coordinate Zn(2+): Cys75, His78, and Cys146.

It belongs to the GTP cyclohydrolase I family. In terms of assembly, homomer.

It catalyses the reaction GTP + H2O = 7,8-dihydroneopterin 3'-triphosphate + formate + H(+). The protein operates within cofactor biosynthesis; 7,8-dihydroneopterin triphosphate biosynthesis; 7,8-dihydroneopterin triphosphate from GTP: step 1/1. This is GTP cyclohydrolase 1 from Clostridium kluyveri (strain NBRC 12016).